The sequence spans 377 residues: Protein ECM9 (377 aa).

Functionally, may be involved in cell wall organization and biogenesis. This is Protein ECM9 (ECM9) from Saccharomyces cerevisiae (strain ATCC 204508 / S288c) (Baker's yeast).